A 341-amino-acid polypeptide reads, in one-letter code: Glucokinase (341 aa).

ATP is bound at residue 18–23; the sequence is GDIGGT.

It belongs to the bacterial glucokinase family.

The protein resides in the cytoplasm. It catalyses the reaction D-glucose + ATP = D-glucose 6-phosphate + ADP + H(+). The protein is Glucokinase of Rhizobium etli (strain ATCC 51251 / DSM 11541 / JCM 21823 / NBRC 15573 / CFN 42).